Reading from the N-terminus, the 880-residue chain is Tyrosine-protein kinase receptor TYRO3 (880 aa).

The N-terminal stretch at 1–30 (MALRRSMGRPGLRPLLLAGLASLLLPGSAA) is a signal peptide. Ig-like C2-type domains are found at residues 31 to 118 (AGLK…TKIS) and 129 to 210 (PFFT…AIIR). Over 31–419 (AGLKLMGAPV…QGPPHSRTSW (389 aa)) the chain is Extracellular. 8 N-linked (GlcNAc...) asparagine glycosylation sites follow: Asn53, Asn75, Asn181, Asn220, Asn230, Asn283, Asn356, and Asn370. 2 cysteine pairs are disulfide-bonded: Cys54-Cys107 and Cys150-Cys193. 2 consecutive Fibronectin type-III domains span residues 217–310 (APFN…TKGL) and 315–406 (APQN…SHDH). A helical membrane pass occupies residues 420–440 (VPVVLGVLTALITAAALALIL). Topologically, residues 441 to 880 (LRKRRKETRF…QQGLLPHSSC (440 aa)) are cytoplasmic. Residue Ser456 is modified to Phosphoserine. Positions 508 to 785 (FTLGRMLGKG…LENILGHLSV (278 aa)) constitute a Protein kinase domain. ATP contacts are provided by residues 514–522 (LGKGEFGSV) and Lys540. The active-site Proton acceptor is the Asp645. Phosphotyrosine; by autocatalysis is present on residues Tyr671, Tyr675, Tyr676, and Tyr794. Disordered regions lie at residues 804–827 (AENGSPELPCGEQSSSEAGDGSGM) and 842–864 (SPGGLAESPGQLEQQPESPLNEN). Phosphoserine is present on residues Ser808 and Ser859. A compositionally biased stretch (polar residues) spans 852 to 864 (QLEQQPESPLNEN).

Belongs to the protein kinase superfamily. Tyr protein kinase family. AXL/UFO subfamily. Monomer and homodimer. Interacts (via N-terminus) with extracellular ligands TULP1 and GAS6. Interacts with PIK3R1; this interaction increases PI3-kinase activity. Autophosphorylated. In terms of tissue distribution, abundant in the brain and lower levels in other tissues.

It is found in the cell membrane. It catalyses the reaction L-tyrosyl-[protein] + ATP = O-phospho-L-tyrosyl-[protein] + ADP + H(+). Its function is as follows. Receptor tyrosine kinase that transduces signals from the extracellular matrix into the cytoplasm by binding to several ligands including TULP1 or GAS6. Regulates many physiological processes including cell survival, migration and differentiation. Ligand binding at the cell surface induces dimerization and autophosphorylation of TYRO3 on its intracellular domain that provides docking sites for downstream signaling molecules. Following activation by ligand, interacts with PIK3R1 and thereby enhances PI3-kinase activity. Activates the AKT survival pathway, including nuclear translocation of NF-kappa-B and up-regulation of transcription of NF-kappa-B-regulated genes. TYRO3 signaling plays a role in various processes such as neuron protection from excitotoxic injury, platelet aggregation and cytoskeleton reorganization. Also plays an important role in inhibition of Toll-like receptors (TLRs)-mediated innate immune response by activating STAT1, which selectively induces production of suppressors of cytokine signaling SOCS1 and SOCS3. The chain is Tyrosine-protein kinase receptor TYRO3 (Tyro3) from Rattus norvegicus (Rat).